The chain runs to 252 residues: 3-dehydroquinate dehydratase (252 aa).

3-dehydroquinate-binding positions include S21, 46-48 (EWR), and R82. Catalysis depends on H143, which acts as the Proton donor/acceptor. The Schiff-base intermediate with substrate role is filled by K170. The 3-dehydroquinate site is built by R213, S232, and Q236.

This sequence belongs to the type-I 3-dehydroquinase family. As to quaternary structure, homodimer.

The enzyme catalyses 3-dehydroquinate = 3-dehydroshikimate + H2O. It participates in metabolic intermediate biosynthesis; chorismate biosynthesis; chorismate from D-erythrose 4-phosphate and phosphoenolpyruvate: step 3/7. Functionally, involved in the third step of the chorismate pathway, which leads to the biosynthesis of aromatic amino acids. Catalyzes the cis-dehydration of 3-dehydroquinate (DHQ) and introduces the first double bond of the aromatic ring to yield 3-dehydroshikimate. In Shigella dysenteriae serotype 1 (strain Sd197), this protein is 3-dehydroquinate dehydratase.